The following is a 252-amino-acid chain: Ribonuclease HII (252 aa).

One can recognise an RNase H type-2 domain in the interval 41–232; that stretch reads LLVAGVDEAG…VRLALEGREQ (192 aa). A divalent metal cation contacts are provided by D47, E48, and D140.

It belongs to the RNase HII family. Mn(2+) is required as a cofactor. Mg(2+) serves as cofactor.

It localises to the cytoplasm. It catalyses the reaction Endonucleolytic cleavage to 5'-phosphomonoester.. In terms of biological role, endonuclease that specifically degrades the RNA of RNA-DNA hybrids. The protein is Ribonuclease HII of Xanthomonas oryzae pv. oryzae (strain KACC10331 / KXO85).